A 115-amino-acid polypeptide reads, in one-letter code: Large ribosomal subunit protein uL18 (115 aa).

It belongs to the universal ribosomal protein uL18 family. In terms of assembly, part of the 50S ribosomal subunit; part of the 5S rRNA/L5/L18/L25 subcomplex. Contacts the 5S and 23S rRNAs.

Functionally, this is one of the proteins that bind and probably mediate the attachment of the 5S RNA into the large ribosomal subunit, where it forms part of the central protuberance. The polypeptide is Large ribosomal subunit protein uL18 (Marinobacter nauticus (strain ATCC 700491 / DSM 11845 / VT8) (Marinobacter aquaeolei)).